An 884-amino-acid chain; its full sequence is Exocyst complex component 2 (884 aa).

Residues 1 to 11 (MEENAQARERL) are compositionally biased toward basic and acidic residues. The disordered stretch occupies residues 1 to 27 (MEENAQARERLPPTVTGLSPTEGVPGT). Residues 13–98 (PTVTGLSPTE…GSSNVKFRVF (86 aa)) form the IPT/TIG domain. Coiled coils occupy residues 178–206 (ADAT…SEEM) and 846–874 (NQRL…AENL).

The protein belongs to the SEC5 family. In terms of assembly, the exocyst complex is composed of sec-3/exoc1, sec-5/exoc2, sec-6/exoc3, sec-8/exoc4, sec-10/exoc5, sec-15/exoc6, exo-70/exoc7 and exo-84/exoc8.

In terms of biological role, component of the exocyst complex involved in the docking of exocytic vesicles with fusion sites on the plasma membrane. This Caenorhabditis elegans protein is Exocyst complex component 2 (sec-5).